Here is a 472-residue protein sequence, read N- to C-terminus: NADH-quinone oxidoreductase subunit N (472 aa).

Helical transmembrane passes span 11–31, 43–63, 67–87, 103–123, 125–145, 159–179, 200–220, 234–254, 265–285, 293–313, 318–338, 362–384, 401–421, and 446–466; these read AELSLTAVFILMFLLDLFLPA, ILLTIQLLANLWPEEVTLFGG, STPMASVLKSILTIGTILVFL, GEFYILTLSTLLGMYFMVSAG, FLLFFLGLELATVPMACLVAF, FILSALFSSGIFLYGISMIYG, VLALVFFFSGLAFKLSLVPFH, VSAYLSVISKGAAAFALMIIL, WSEILCIIIVATITIANLFAI, FMAFSSISQAGYIMLAVLAGT, ASLVYYIVVYIAANLAVFGVI, PKLTMVMTLALFSLAGIPPFAGF, LIVFIALVNTIISLYYYLLIV, and LLVCVAGIFVLGIISGVYQLL.

It belongs to the complex I subunit 2 family. NDH-1 is composed of 14 different subunits. Subunits NuoA, H, J, K, L, M, N constitute the membrane sector of the complex.

It is found in the cell inner membrane. The enzyme catalyses a quinone + NADH + 5 H(+)(in) = a quinol + NAD(+) + 4 H(+)(out). Its function is as follows. NDH-1 shuttles electrons from NADH, via FMN and iron-sulfur (Fe-S) centers, to quinones in the respiratory chain. The immediate electron acceptor for the enzyme in this species is believed to be a menaquinone. Couples the redox reaction to proton translocation (for every two electrons transferred, four hydrogen ions are translocated across the cytoplasmic membrane), and thus conserves the redox energy in a proton gradient. In Phocaeicola vulgatus (strain ATCC 8482 / DSM 1447 / JCM 5826 / CCUG 4940 / NBRC 14291 / NCTC 11154) (Bacteroides vulgatus), this protein is NADH-quinone oxidoreductase subunit N.